A 200-amino-acid chain; its full sequence is Potassium-transporting ATPase KdpC subunit (200 aa).

The chain crosses the membrane as a helical span at residues 13 to 33 (ITLIFWLITAIIYPLAILVVG).

The protein belongs to the KdpC family. In terms of assembly, the system is composed of three essential subunits: KdpA, KdpB and KdpC.

It localises to the cell membrane. Part of the high-affinity ATP-driven potassium transport (or Kdp) system, which catalyzes the hydrolysis of ATP coupled with the electrogenic transport of potassium into the cytoplasm. This subunit acts as a catalytic chaperone that increases the ATP-binding affinity of the ATP-hydrolyzing subunit KdpB by the formation of a transient KdpB/KdpC/ATP ternary complex. The chain is Potassium-transporting ATPase KdpC subunit from Anabaena sp. (strain L31).